The sequence spans 183 residues: MLLEETLKSCPTVKRGDYEYFIHPISDGVPIVNPKLLREVATRIIKEVDFENIDKIVTAEAMGIPLVTTLSLYTDVPYVIMRKREYKLKGEIPVHQETGYSKGQLYLNGIEKGDRVLIVDDVISTGGTMIAIINALKKAGAEIKDIVCVIERGEGKKIVEEKTGYKIKTLVKLDVKDGKVVIL.

Belongs to the purine/pyrimidine phosphoribosyltransferase family. Archaeal HPRT subfamily. As to quaternary structure, homodimer.

It localises to the cytoplasm. It carries out the reaction IMP + diphosphate = hypoxanthine + 5-phospho-alpha-D-ribose 1-diphosphate. The catalysed reaction is GMP + diphosphate = guanine + 5-phospho-alpha-D-ribose 1-diphosphate. Its pathway is purine metabolism; IMP biosynthesis via salvage pathway; IMP from hypoxanthine: step 1/1. In terms of biological role, catalyzes a salvage reaction resulting in the formation of IMP that is energically less costly than de novo synthesis. The protein is Hypoxanthine/guanine phosphoribosyltransferase of Methanotorris igneus (strain DSM 5666 / JCM 11834 / Kol 5).